The primary structure comprises 168 residues: Ribosome maturation factor RimP (168 aa).

The protein belongs to the RimP family.

The protein localises to the cytoplasm. Required for maturation of 30S ribosomal subunits. The protein is Ribosome maturation factor RimP of Syntrophobacter fumaroxidans (strain DSM 10017 / MPOB).